Reading from the N-terminus, the 511-residue chain is Maturase K (511 aa).

The protein belongs to the intron maturase 2 family. MatK subfamily.

It localises to the plastid. It is found in the chloroplast. In terms of biological role, usually encoded in the trnK tRNA gene intron. Probably assists in splicing its own and other chloroplast group II introns. This chain is Maturase K, found in Maihuenia poeppigii (Hardy cactus).